Reading from the N-terminus, the 378-residue chain is UPF0754 membrane protein BcerKBAB4_0766 (378 aa).

2 helical membrane-spanning segments follow: residues 1-21 (MNIW…GGYT) and 357-377 (YLGA…LLFL).

The protein belongs to the UPF0754 family.

The protein localises to the cell membrane. This chain is UPF0754 membrane protein BcerKBAB4_0766, found in Bacillus mycoides (strain KBAB4) (Bacillus weihenstephanensis).